The sequence spans 558 residues: Formate--tetrahydrofolate ligase (558 aa).

ATP is bound at residue threonine 66 to threonine 73.

This sequence belongs to the formate--tetrahydrofolate ligase family.

It catalyses the reaction (6S)-5,6,7,8-tetrahydrofolate + formate + ATP = (6R)-10-formyltetrahydrofolate + ADP + phosphate. Its pathway is one-carbon metabolism; tetrahydrofolate interconversion. The sequence is that of Formate--tetrahydrofolate ligase from Clostridium kluyveri (strain NBRC 12016).